The following is a 39-amino-acid chain: Cytochrome b559 subunit beta (39 aa).

Residues 14–30 traverse the membrane as a helical segment; that stretch reads WLTVHGLAVPTVSFLGS. Position 18 (histidine 18) interacts with heme.

The protein belongs to the PsbE/PsbF family. As to quaternary structure, heterodimer of an alpha subunit and a beta subunit. PSII is composed of 1 copy each of membrane proteins PsbA, PsbB, PsbC, PsbD, PsbE, PsbF, PsbH, PsbI, PsbJ, PsbK, PsbL, PsbM, PsbT, PsbX, PsbY, PsbZ, Psb30/Ycf12, at least 3 peripheral proteins of the oxygen-evolving complex and a large number of cofactors. It forms dimeric complexes. The cofactor is heme b.

It is found in the plastid. The protein localises to the chloroplast thylakoid membrane. Functionally, this b-type cytochrome is tightly associated with the reaction center of photosystem II (PSII). PSII is a light-driven water:plastoquinone oxidoreductase that uses light energy to abstract electrons from H(2)O, generating O(2) and a proton gradient subsequently used for ATP formation. It consists of a core antenna complex that captures photons, and an electron transfer chain that converts photonic excitation into a charge separation. This chain is Cytochrome b559 subunit beta, found in Lactuca sativa (Garden lettuce).